A 392-amino-acid polypeptide reads, in one-letter code: NADH dehydrogenase-like protein YjlD (392 aa).

The protein belongs to the NADH dehydrogenase family. FAD serves as cofactor.

The chain is NADH dehydrogenase-like protein YjlD (yjlD) from Bacillus subtilis (strain 168).